The sequence spans 139 residues: Exodeoxyribonuclease 7 small subunit (139 aa).

Disordered stretches follow at residues 1 to 26 (MAKKKRNPSAEEAGDGEQTAAELGDF) and 82 to 139 (DAEG…EDDE). A compositionally biased stretch (acidic residues) spans 130-139 (ADLDSAEDDE).

This sequence belongs to the XseB family. In terms of assembly, heterooligomer composed of large and small subunits.

It is found in the cytoplasm. It catalyses the reaction Exonucleolytic cleavage in either 5'- to 3'- or 3'- to 5'-direction to yield nucleoside 5'-phosphates.. Functionally, bidirectionally degrades single-stranded DNA into large acid-insoluble oligonucleotides, which are then degraded further into small acid-soluble oligonucleotides. The polypeptide is Exodeoxyribonuclease 7 small subunit (Rhodopirellula baltica (strain DSM 10527 / NCIMB 13988 / SH1)).